The following is a 470-amino-acid chain: Cysteine--tRNA ligase (470 aa).

Cys30 serves as a coordination point for Zn(2+). Residues 32–42 (PTVYNYIHIGN) carry the 'HIGH' region motif. The Zn(2+) site is built by Cys211, His236, and Glu240. The short motif at 268 to 272 (KMSKS) is the 'KMSKS' region element. Lys271 contributes to the ATP binding site.

This sequence belongs to the class-I aminoacyl-tRNA synthetase family. Monomer. Requires Zn(2+) as cofactor.

Its subcellular location is the cytoplasm. It catalyses the reaction tRNA(Cys) + L-cysteine + ATP = L-cysteinyl-tRNA(Cys) + AMP + diphosphate. This Fervidobacterium nodosum (strain ATCC 35602 / DSM 5306 / Rt17-B1) protein is Cysteine--tRNA ligase.